Here is a 165-residue protein sequence, read N- to C-terminus: uncharacterized protein (165 aa).

This is an uncharacterized protein from Aquifex aeolicus (strain VF5).